The following is an 874-amino-acid chain: Pyruvate, phosphate dikinase (874 aa).

The interval 2–340 is N-terminal; that stretch reads AKWVYKFEEG…LYFLQTRNGK (339 aa). An ATP-binding site is contributed by Arg92. The interval 340-399 is linker 1; sequence KRTAPAALQIACDLVDEGMITEEEAVVRIEAKSLDQLLHPTFNPAALKAGEVIGSALPAS. The interval 400-498 is central; the sequence is PGAAAGKVYF…TFAEGDYISL (99 aa). The residue at position 453 (Thr453) is a Phosphothreonine; by PDRP1. His455 serves as the catalytic Tele-phosphohistidine intermediate. Positions 499 to 533 are linker 2; that stretch reads DGSTGKIYKGDIETQEASVSGSFERIMVWADKFRT. The interval 534–874 is C-terminal; that stretch reads LKVRTNADTP…AAAQAALNNK (341 aa). 7 residues coordinate substrate: Arg561, Arg617, Glu745, Gly766, Thr767, Asn768, and Asp769. Glu745 is a binding site for Mg(2+). Mg(2+) is bound at residue Asp769. Residue Cys831 is the Proton donor of the active site.

This sequence belongs to the PEP-utilizing enzyme family. In terms of assembly, homodimer. Mg(2+) is required as a cofactor. In terms of processing, phosphorylation of Thr-453 in the dark inactivates the enzyme. Dephosphorylation upon light stimulation reactivates the enzyme.

It carries out the reaction pyruvate + phosphate + ATP = phosphoenolpyruvate + AMP + diphosphate + H(+). With respect to regulation, activated by light-induced dephosphorylation. Inhibited by dark-induced phosphorylation. Both reactions are catalyzed by PDRP1. Functionally, catalyzes the reversible phosphorylation of pyruvate and phosphate. In E.histolytica and C.symbiosus, PPDK functions in the direction of ATP synthesis. This Clostridium symbiosum (Bacteroides symbiosus) protein is Pyruvate, phosphate dikinase (ppdK).